Reading from the N-terminus, the 293-residue chain is Elongation factor Ts (293 aa).

An involved in Mg(2+) ion dislocation from EF-Tu region spans residues 80 to 83 (TDFV).

The protein belongs to the EF-Ts family.

It localises to the cytoplasm. Functionally, associates with the EF-Tu.GDP complex and induces the exchange of GDP to GTP. It remains bound to the aminoacyl-tRNA.EF-Tu.GTP complex up to the GTP hydrolysis stage on the ribosome. In Herminiimonas arsenicoxydans, this protein is Elongation factor Ts.